The sequence spans 352 residues: MTIAVGRARQERGWFDIVDDWLKRDRFVFIGWSGLLLFPCAYLALGGWLTGTTFVTSWYTHGLASSYLEGCNFLTVAVSTPADSMGHSLLLLWGPEAQGDFTRWCQIGGLWTFVAFHGALGLIGFMLRQFEIARLVGVRPYNAIAFSAPIAVFVSVFLIYPLGQSSWFFAPSFGVAAIFRFLLFFQGFHNWTLNPFHMMGVAGVLGGALLCAIHGATVENTLYKDGEAASTFRAFEPTQAEETYSMVTANRYWSQIFGIAFSNKRWLHFFMLFVPVTGLWMSSIGVVGLALNLRAYDFISQETRAAEDPEFETFYTKNILLNEGIRAWMAPQDQPHERFEFPEEVLPRGNAL.

The chain crosses the membrane as a helical span at residues 40–60; sequence CAYLALGGWLTGTTFVTSWYT. Position 117 (H117) interacts with chlorophyll a. Residues 124-140 traverse the membrane as a helical segment; it reads GFMLRQFEIARLVGVRP. Pheophytin a is bound by residues Q129 and N142. Residues 152–165 form a helical membrane-spanning segment; the sequence is VFVSVFLIYPLGQS. Position 197 (H197) interacts with chlorophyll a. Residues 207 to 227 form a helical membrane-spanning segment; sequence GALLCAIHGATVENTLYKDGE. H214 and F261 together coordinate a plastoquinone. Position 214 (H214) interacts with Fe cation. Residue H268 coordinates Fe cation. Residues 278-294 form a helical membrane-spanning segment; that stretch reads GLWMSSIGVVGLALNLR.

Belongs to the reaction center PufL/M/PsbA/D family. In terms of assembly, PSII is composed of 1 copy each of membrane proteins PsbA, PsbB, PsbC, PsbD, PsbE, PsbF, PsbH, PsbI, PsbJ, PsbK, PsbL, PsbM, PsbT, PsbX, PsbY, PsbZ, Psb30/Ycf12, peripheral proteins PsbO, CyanoQ (PsbQ), PsbU, PsbV and a large number of cofactors. It forms dimeric complexes. The D1/D2 heterodimer binds P680, chlorophylls that are the primary electron donor of PSII, and subsequent electron acceptors. It shares a non-heme iron and each subunit binds pheophytin, quinone, additional chlorophylls, carotenoids and lipids. There is also a Cl(-1) ion associated with D1 and D2, which is required for oxygen evolution. The PSII complex binds additional chlorophylls, carotenoids and specific lipids. is required as a cofactor.

It localises to the cellular thylakoid membrane. It catalyses the reaction 2 a plastoquinone + 4 hnu + 2 H2O = 2 a plastoquinol + O2. Its function is as follows. Photosystem II (PSII) is a light-driven water:plastoquinone oxidoreductase that uses light energy to abstract electrons from H(2)O, generating O(2) and a proton gradient subsequently used for ATP formation. It consists of a core antenna complex that captures photons, and an electron transfer chain that converts photonic excitation into a charge separation. The D1/D2 (PsbA/PsbD) reaction center heterodimer binds P680, the primary electron donor of PSII as well as several subsequent electron acceptors. D2 is needed for assembly of a stable PSII complex. The sequence is that of Photosystem II D2 protein from Synechococcus sp. (strain JA-3-3Ab) (Cyanobacteria bacterium Yellowstone A-Prime).